A 603-amino-acid chain; its full sequence is MRRRAARGPGPPPPGPGLSRLPLPLLLLLALGTRGGCAAPAPAPRAEDLSLGVEWLSRFGYLPPADPTTGQLQTQEELSKAITAMQQFGGLEATGILDEATLALMKTPRCSLPDLPVLTQARRRRQAPAPTKWNKRNLSWRVRTFPRDSPLGHDTVRALMYYALKVWSDIAPLNFHEVAGSAADIQIDFSKADHNDGYPFDGPGGTVAHAFFPGHHHTAGDTHFDDDEAWTFRSSDAHGMDLFAVAVHEFGHAIGLSHVAAAHSIMRPYYQGPVGDPLRYGLPYEDKVRVWQLYGVRESVSPTAQPEEPPLLPEPPDNRSSAPPRKDVPHRCSTHFDAVAQIRGEAFFFKGKYFWRLTRDRHLVSLQPAQMHRFWRGLPLHLDSVDAVYERTSDHKIVFFKGDRYWVFKDNNVEEGYPRPVSDFSLPPGGIDAAFSWAHNDRTYFFKDQLYWRYDDHTRHMDPGYPAQSPLWRGVPSTLDDAMRWSDGASYFFRGQEYWKVLDGELEVAPGYPQSTARDWLVCGDSQADGSVAAGVDAAEGPRAPPGQHDQSRSEDGYEVCSCTSGASSPPGAPGPLVAATMLLLLPPLSPGALWTAAQALTL.

A signal peptide spans 1-35; that stretch reads MRRRAARGPGPPPPGPGLSRLPLPLLLLLALGTRG. A propeptide spanning residues 36–125 is cleaved from the precursor; it reads GCAAPAPAPR…PVLTQARRRR (90 aa). A Cysteine switch motif is present at residues 108 to 115; that stretch reads PRCSLPDL. Cysteine 110 is a binding site for Zn(2+). Asparagine 137 is a glycosylation site (N-linked (GlcNAc...) asparagine). Histidine 248 lines the Zn(2+) pocket. The active site involves glutamate 249. Zn(2+) is bound by residues histidine 252 and histidine 258. Residues 301–329 are disordered; it reads SPTAQPEEPPLLPEPPDNRSSAPPRKDVP. Asparagine 318 carries an N-linked (GlcNAc...) asparagine glycan. Cysteine 332 and cysteine 523 are oxidised to a cystine. 4 Hemopexin repeats span residues 333 to 378, 382 to 427, 428 to 475, and 476 to 523; these read STHF…WRGL, LDSV…FSLP, PGGI…WRGV, and PSTL…WLVC. The tract at residues 537 to 571 is disordered; sequence DAAEGPRAPPGQHDQSRSEDGYEVCSCTSGASSPP. The GPI-anchor amidated serine moiety is linked to residue serine 565. The propeptide at 566–603 is removed in mature form; it reads GASSPPGAPGPLVAATMLLLLPPLSPGALWTAAQALTL.

The protein belongs to the peptidase M10A family. The cofactor is Zn(2+). Ca(2+) is required as a cofactor. Post-translationally, the precursor is cleaved by a furin endopeptidase. As to expression, expressed in brain, leukocytes, colon, ovary testis and breast cancer. Expressed also in many transformed and non-transformed cell types.

The protein localises to the cell membrane. It is found in the secreted. Its subcellular location is the extracellular space. The protein resides in the extracellular matrix. In terms of biological role, endopeptidase that degrades various components of the extracellular matrix, such as fibrin. May be involved in the activation of membrane-bound precursors of growth factors or inflammatory mediators, such as tumor necrosis factor-alpha. May also be involved in tumoral process. Cleaves pro-TNF-alpha at the '74-Ala-|-Gln-75' site. Not obvious if able to proteolytically activate progelatinase A. Does not hydrolyze collagen types I, II, III, IV and V, gelatin, fibronectin, laminin, decorin nor alpha1-antitrypsin. The protein is Matrix metalloproteinase-17 (MMP17) of Homo sapiens (Human).